The sequence spans 115 residues: uncharacterized protein (115 aa).

3 helical membrane-spanning segments follow: residues 10-30 (IAIL…SFWL), 47-67 (ASGI…ATVA), and 77-97 (VHFF…AIIV).

It localises to the cell membrane. This is an uncharacterized protein from Mycoplasma genitalium (strain ATCC 33530 / DSM 19775 / NCTC 10195 / G37) (Mycoplasmoides genitalium).